Consider the following 182-residue polypeptide: Small ribosomal subunit protein uS4c (182 aa).

The S4 RNA-binding domain maps to 82-143 (MRLDNILFRL…KQRSKALIQN (62 aa)).

Belongs to the universal ribosomal protein uS4 family. As to quaternary structure, part of the 30S ribosomal subunit. Contacts protein S5. The interaction surface between S4 and S5 is involved in control of translational fidelity.

The protein localises to the plastid. It is found in the chloroplast. Functionally, one of the primary rRNA binding proteins, it binds directly to 16S rRNA where it nucleates assembly of the body of the 30S subunit. Its function is as follows. With S5 and S12 plays an important role in translational accuracy. In Libertia formosa (Snowy mermaid), this protein is Small ribosomal subunit protein uS4c (rps4).